A 227-amino-acid chain; its full sequence is Ribonuclease 3 (227 aa).

Positions 5–127 constitute an RNase III domain; sequence YQKLSRRIGY…IIGAMYLDAG (123 aa). E40 is a binding site for Mg(2+). D44 is a catalytic residue. The Mg(2+) site is built by D113 and E116. E116 is an active-site residue. Positions 154 to 224 constitute a DRBM domain; it reads DAKTRLQEFL…AAKALKKLEK (71 aa).

It belongs to the ribonuclease III family. As to quaternary structure, homodimer. Requires Mg(2+) as cofactor.

It is found in the cytoplasm. It catalyses the reaction Endonucleolytic cleavage to 5'-phosphomonoester.. Digests double-stranded RNA. Involved in the processing of primary rRNA transcript to yield the immediate precursors to the large and small rRNAs (23S and 16S). Processes some mRNAs, and tRNAs when they are encoded in the rRNA operon. Processes pre-crRNA and tracrRNA of type II CRISPR loci if present in the organism. The chain is Ribonuclease 3 from Marinomonas sp. (strain MWYL1).